Here is a 203-residue protein sequence, read N- to C-terminus: Small ribosomal subunit protein uS2 (203 aa).

This sequence belongs to the universal ribosomal protein uS2 family.

The chain is Small ribosomal subunit protein uS2 from Methanoregula boonei (strain DSM 21154 / JCM 14090 / 6A8).